Reading from the N-terminus, the 358-residue chain is Peptide chain release factor 1 (358 aa).

N5-methylglutamine is present on Gln235.

Belongs to the prokaryotic/mitochondrial release factor family. Methylated by PrmC. Methylation increases the termination efficiency of RF1.

The protein localises to the cytoplasm. In terms of biological role, peptide chain release factor 1 directs the termination of translation in response to the peptide chain termination codons UAG and UAA. This Nitrosospira multiformis (strain ATCC 25196 / NCIMB 11849 / C 71) protein is Peptide chain release factor 1.